A 172-amino-acid polypeptide reads, in one-letter code: Large ribosomal subunit protein uL10 (172 aa).

This sequence belongs to the universal ribosomal protein uL10 family. In terms of assembly, part of the ribosomal stalk of the 50S ribosomal subunit. The N-terminus interacts with L11 and the large rRNA to form the base of the stalk. The C-terminus forms an elongated spine to which L12 dimers bind in a sequential fashion forming a multimeric L10(L12)X complex.

Functionally, forms part of the ribosomal stalk, playing a central role in the interaction of the ribosome with GTP-bound translation factors. This Nitrobacter hamburgensis (strain DSM 10229 / NCIMB 13809 / X14) protein is Large ribosomal subunit protein uL10.